We begin with the raw amino-acid sequence, 397 residues long: P-selectin glycoprotein ligand 1 (397 aa).

The N-terminal stretch at 1–17 (MSPSFLVLLTILGPGNS) is a signal peptide. Positions 18–41 (LQLQDPWGHETKEAPGPVHLRERR) are excised as a propeptide. The Extracellular portion of the chain corresponds to 18 to 307 (LQLQDPWGHE…SSDLIPVKQC (290 aa)). Y54 bears the Sulfotyrosine mark. T58 carries O-linked (GalNAc...) threonine glycosylation. N66 carries an N-linked (GlcNAc...) asparagine glycan. The disordered stretch occupies residues 89–261 (TSAGTSERAT…TMETASTESN (173 aa)). A compositionally biased stretch (polar residues) spans 120–198 (STDSATQWSL…PMEAETSQPA (79 aa)). 10 consecutive repeat copies span residues 126–135 (QWSLTSVETV), 136–145 (QPASTEVETS), 146–155 (QPAPMEAETS), 156–165 (QPAPMEAETS), 166–175 (QPAPMEAETS), 176–185 (QPAPMEADTS), 186–195 (QPAPMEAETS), 196–205 (QPAPNEAETS), 206–215 (KPAPTEAETS), and 216–225 (KPAPTEAETT). The segment at 126–225 (QWSLTSVETV…KPAPTEAETT (100 aa)) is 10 X 10 AA tandem repeats. Residues 236–261 (LFTTSAATEVPSTEPTTMETASTESN) show a composition bias toward polar residues. A glycan (N-linked (GlcNAc...) asparagine) is linked at N261. Residues 308-328 (LLIILILASLATIFLVCTVVL) traverse the membrane as a helical segment. Over 329–397 (AVRLSRKTHM…DDLTLHSFLP (69 aa)) the chain is Cytoplasmic. The tract at residues 364 to 390 (PVTANGGLPKVQDLKTEPSGDRDGDDL) is disordered. Residues 375-390 (QDLKTEPSGDRDGDDL) show a composition bias toward basic and acidic residues. T391 carries the post-translational modification Phosphothreonine. S394 is subject to Phosphoserine.

As to quaternary structure, homodimer; disulfide-linked. Interacts with P- and E-selectins, through their lectin/EGF domains. Interaction with P-selectin requires sialyl Lewis X glycan modification and tyrosine sulfation, probably on Tyr-54, for high affinity binding. Dimerization appears not to be required for P-selectin/SELP binding. Interacts with SNX20. Interacts with MSN and SYK; mediates SYK activation downstream of SELPLG. Interacts with HAVCR1. In terms of processing, displays complex, core-2, sialylated and fucosylated O-linked oligosaccharides, at least some of which appear to contain poly-N-acetyllactosamine with varying degrees of substitution. Mainly disialylated or neutral forms of the core-2 tetrasaccharide, Galbeta1--&gt;4GlcNAcbeta1--&gt;6(Galbeta1--&gt;3)GalNAcOH. The GlcN:GalN ratio is approximately 2:1 and the Man:Fuc ratio 3:5. Contains about 14% fucose with alpha-1,3 linkage present in two forms: One species is a disialylated, monofucosylated glycan, and the other, a monosialylated, trifucosylated glycan with a polylactosamine backbone. The fucosylated forms carry the Lewis antigen and are important for interaction with selectins and for functioning. No sulfated O-glycans. Some N-glycosylation. In terms of tissue distribution, highly expressed in blood, bone marrow, brain, adipose tissue, spleen, and thymus. Also expressed in heart, kidney, liver, muscle, ovary, and stomach.

Its subcellular location is the cell membrane. Functionally, a SLe(x)-type proteoglycan, which through high affinity, calcium-dependent interactions with E- and P-selectins, mediates rapid rolling of leukocytes over vascular surfaces during the initial steps in inflammation. Critical for the initial leukocyte capture. The polypeptide is P-selectin glycoprotein ligand 1 (Selplg) (Mus musculus (Mouse)).